A 464-amino-acid chain; its full sequence is Argininosuccinate lyase (464 aa).

This sequence belongs to the lyase 1 family. Argininosuccinate lyase subfamily.

Its subcellular location is the cytoplasm. It catalyses the reaction 2-(N(omega)-L-arginino)succinate = fumarate + L-arginine. Its pathway is amino-acid biosynthesis; L-arginine biosynthesis; L-arginine from L-ornithine and carbamoyl phosphate: step 3/3. The chain is Argininosuccinate lyase from Pseudomonas syringae pv. tomato (strain ATCC BAA-871 / DC3000).